We begin with the raw amino-acid sequence, 271 residues long: Homeobox protein pal-1 (271 aa).

Disordered regions lie at residues M1–N25, P100–S135, and G178–V202. 2 stretches are compositionally biased toward low complexity: residues P100 to P117 and S125 to S135. Residues D189–V202 are compositionally biased toward polar residues. Residues A207–K266 constitute a DNA-binding region (homeobox).

Belongs to the Caudal homeobox family. In terms of assembly, interacts with tir-1 and let-756.

Its subcellular location is the nucleus. It is found in the chromosome. The protein localises to the centromere. It localises to the kinetochore. Transcriptional activator. Interacts with promoter regions for tbx-8.9, tbx-9, elt-1, hnd-1, scrt-1, and vab-7 genes. Binds the sequence ATTTATGAC. Binds to the enhancer region of the hlh-1 gene promoter during embryonic body wall muscle development. Activates the gene for mab-5 in embryo development. Necessary for vab-7 expression in C blastomeres in the posterior of embryos. Required for posterior V6 neuroectoblast cell fate specification during postembryonic neurogenesis (patterning) which generates the characteristic ray lineage during male tail development. Binds to ced-3 promoter and activated expression which is crucial for tail-spike cell death. Has a role in E cell specification in endoderm development and body wall muscle development. In Caenorhabditis briggsae, this protein is Homeobox protein pal-1.